A 336-amino-acid chain; its full sequence is Glyceraldehyde-3-phosphate dehydrogenase (336 aa).

NAD(+)-binding positions include 12–13 (RI), aspartate 34, arginine 78, and threonine 121. Residues 151 to 153 (SCT), threonine 182, arginine 199, 212 to 213 (TG), and arginine 235 each bind D-glyceraldehyde 3-phosphate. Residue cysteine 152 is the Nucleophile of the active site. Asparagine 316 lines the NAD(+) pocket.

This sequence belongs to the glyceraldehyde-3-phosphate dehydrogenase family. In terms of assembly, homotetramer.

The protein localises to the cytoplasm. It carries out the reaction D-glyceraldehyde 3-phosphate + phosphate + NAD(+) = (2R)-3-phospho-glyceroyl phosphate + NADH + H(+). The protein operates within carbohydrate degradation; glycolysis; pyruvate from D-glyceraldehyde 3-phosphate: step 1/5. Functionally, catalyzes the oxidative phosphorylation of glyceraldehyde 3-phosphate (G3P) to 1,3-bisphosphoglycerate (BPG) using the cofactor NAD. The first reaction step involves the formation of a hemiacetal intermediate between G3P and a cysteine residue, and this hemiacetal intermediate is then oxidized to a thioester, with concomitant reduction of NAD to NADH. The reduced NADH is then exchanged with the second NAD, and the thioester is attacked by a nucleophilic inorganic phosphate to produce BPG. This is Glyceraldehyde-3-phosphate dehydrogenase (gap) from Streptococcus dysgalactiae subsp. equisimilis (Streptococcus equisimilis).